We begin with the raw amino-acid sequence, 195 residues long: Imidazoleglycerol-phosphate dehydratase (195 aa).

Belongs to the imidazoleglycerol-phosphate dehydratase family.

The protein localises to the cytoplasm. The enzyme catalyses D-erythro-1-(imidazol-4-yl)glycerol 3-phosphate = 3-(imidazol-4-yl)-2-oxopropyl phosphate + H2O. The protein operates within amino-acid biosynthesis; L-histidine biosynthesis; L-histidine from 5-phospho-alpha-D-ribose 1-diphosphate: step 6/9. The sequence is that of Imidazoleglycerol-phosphate dehydratase from Leuconostoc mesenteroides subsp. mesenteroides (strain ATCC 8293 / DSM 20343 / BCRC 11652 / CCM 1803 / JCM 6124 / NCDO 523 / NBRC 100496 / NCIMB 8023 / NCTC 12954 / NRRL B-1118 / 37Y).